The following is a 117-amino-acid chain: Large ribosomal subunit protein bL20 (117 aa).

It belongs to the bacterial ribosomal protein bL20 family.

In terms of biological role, binds directly to 23S ribosomal RNA and is necessary for the in vitro assembly process of the 50S ribosomal subunit. It is not involved in the protein synthesizing functions of that subunit. The protein is Large ribosomal subunit protein bL20 of Symbiobacterium thermophilum (strain DSM 24528 / JCM 14929 / IAM 14863 / T).